We begin with the raw amino-acid sequence, 843 residues long: Protein P (843 aa).

A terminal protein domain (TP) region spans residues 1–177 (MPLSYQHFRR…FCGSPYSWEQ (177 aa)). The spacer stretch occupies residues 178-346 (ELQHGSTSLN…YCLSHIINLL (169 aa)). The tract at residues 228–316 (KQGQLANGKQ…VPPSTVGSES (89 aa)) is disordered. 3 stretches are compositionally biased toward polar residues: residues 262–276 (TGHS…TSRF), 286–299 (NPSL…TSTG), and 307–316 (VPPSTVGSES). The interval 347 to 690 (EDWGPCYEHG…YMNLYPVARQ (344 aa)) is polymerase/reverse transcriptase domain (RT). Residues 357–600 (EHHIRTPRTP…YSLHFMGYII (244 aa)) enclose the Reverse transcriptase domain. Residues Asp-429, Asp-551, and Asp-552 each contribute to the Mg(2+) site.

It belongs to the hepadnaviridae P protein family.

The enzyme catalyses DNA(n) + a 2'-deoxyribonucleoside 5'-triphosphate = DNA(n+1) + diphosphate. It carries out the reaction Endonucleolytic cleavage to 5'-phosphomonoester.. With respect to regulation, activated by host HSP70 and HSP40 in vitro to be able to bind the epsilon loop of the pgRNA. Because deletion of the RNase H region renders the protein partly chaperone-independent, the chaperones may be needed indirectly to relieve occlusion of the RNA-binding site by this domain. Inhibited by several reverse-transcriptase inhibitors: Lamivudine, Adefovir and Entecavir. Functionally, multifunctional enzyme that converts the viral RNA genome into dsDNA in viral cytoplasmic capsids. This enzyme displays a DNA polymerase activity that can copy either DNA or RNA templates, and a ribonuclease H (RNase H) activity that cleaves the RNA strand of RNA-DNA heteroduplexes in a partially processive 3'- to 5'-endonucleasic mode. Neo-synthesized pregenomic RNA (pgRNA) are encapsidated together with the P protein, and reverse-transcribed inside the nucleocapsid. Initiation of reverse-transcription occurs first by binding the epsilon loop on the pgRNA genome, and is initiated by protein priming, thereby the 5'-end of (-)DNA is covalently linked to P protein. Partial (+)DNA is synthesized from the (-)DNA template and generates the relaxed circular DNA (RC-DNA) genome. After budding and infection, the RC-DNA migrates in the nucleus, and is converted into a plasmid-like covalently closed circular DNA (cccDNA). The activity of P protein does not seem to be necessary for cccDNA generation, and is presumably released from (+)DNA by host nuclear DNA repair machinery. This Homo sapiens (Human) protein is Protein P.